A 378-amino-acid chain; its full sequence is MNIWLSMLTTTGLGAIIGGFTNHLAIKMLFRPHRPIYIGKFQVPFTPGLIPKRRDELAVQLGKMVVEHLLTPEGIGKKLTNEEFQKGLIHWAQVEVDKVITNEQSLRHMLEKWDVAHVEKEATEKIEQVITEKIQSFLEEYYTYTWEQALPHSVHEKIENAIPNVSAFILKRAIHFFESEEGKSRLSKMIDDFFASRGTLLNLVGMFLGNVSVVDRVQPEVIKFLGQDGTKQLLTEVLQKEWEKLKGRDVKEVETFVEKEMIVSSILSAVKVEETVSKFLNQSVQQVCEPVRETIMEKVVPSAVTKGLKWGAENVASILNNLHLAEIVQQEVSTFSTERLEDLVLSITKNELKMITYLGALLGGMIGIVQGLLLLFLK.

Helical transmembrane passes span 1–21 (MNIW…GGFT) and 357–377 (YLGA…LLFL).

The protein belongs to the UPF0754 family.

It localises to the cell membrane. The protein is UPF0754 membrane protein BCQ_0944 of Bacillus cereus (strain Q1).